A 165-amino-acid polypeptide reads, in one-letter code: Probable chemoreceptor glutamine deamidase CheD (165 aa).

This sequence belongs to the CheD family.

It carries out the reaction L-glutaminyl-[protein] + H2O = L-glutamyl-[protein] + NH4(+). Functionally, probably deamidates glutamine residues to glutamate on methyl-accepting chemotaxis receptors (MCPs), playing an important role in chemotaxis. The protein is Probable chemoreceptor glutamine deamidase CheD of Symbiobacterium thermophilum (strain DSM 24528 / JCM 14929 / IAM 14863 / T).